Consider the following 347-residue polypeptide: tRNA pseudouridine synthase D (347 aa).

The active-site Nucleophile is D81. The TRUD domain occupies G158–K305.

This sequence belongs to the pseudouridine synthase TruD family.

It carries out the reaction uridine(13) in tRNA = pseudouridine(13) in tRNA. In terms of biological role, responsible for synthesis of pseudouridine from uracil-13 in transfer RNAs. This chain is tRNA pseudouridine synthase D, found in Vibrio parahaemolyticus serotype O3:K6 (strain RIMD 2210633).